The chain runs to 214 residues: Probable GTP-binding protein EngB (214 aa).

The region spanning 30–204 (EGFEVAFAGR…YTVLAGWMEL (175 aa)) is the EngB-type G domain. Residues 38–45 (GRSNAGKS), 64–68 (GRTQL), 82–85 (DLPG), 149–152 (TKAD), and 182–185 (LFSA) contribute to the GTP site. Mg(2+) contacts are provided by S45 and T66.

Belongs to the TRAFAC class TrmE-Era-EngA-EngB-Septin-like GTPase superfamily. EngB GTPase family. The cofactor is Mg(2+).

In terms of biological role, necessary for normal cell division and for the maintenance of normal septation. The polypeptide is Probable GTP-binding protein EngB (Pseudomonas fluorescens (strain Pf0-1)).